Here is a 274-residue protein sequence, read N- to C-terminus: MDSRMSDLQALRGFLGGSERLFVLTGAGCSTASGIPDYRDGQGQWKRKPPIDFQAFMGGQPARARYWARSMVGWRHFGQARPNAAHHALARLAQRGQVDLLVTQNVDRLHQAAGGREVLDLHGRLDEVRCMQCDWRGPRGPWQHTLELANPQWAALQAGAAPDGDADLEGQDFSRFVVPSCPRCGGIVKPDVVFFGETVPRERVQRAYAALEHADAVLVVGSSLMLYSGYRFVQAAARAGLPIAAINLGRTRADDMLALKVSRPCDEVLAEVVS.

Residues 1 to 274 (MDSRMSDLQA…CDEVLAEVVS (274 aa)) form the Deacetylase sirtuin-type domain. Residues 26 to 46 (GAGC…GQWK) and 104 to 107 (QNVD) contribute to the NAD(+) site. His-122 (proton acceptor) is an active-site residue. 4 residues coordinate Zn(2+): Cys-130, Cys-133, Cys-181, and Cys-184. Residues 221 to 223 (GSS), 247 to 249 (NLG), and Cys-265 each bind NAD(+).

It belongs to the sirtuin family. Class II subfamily. Requires Zn(2+) as cofactor.

Its subcellular location is the cytoplasm. It catalyses the reaction N(6)-acetyl-L-lysyl-[protein] + NAD(+) + H2O = 2''-O-acetyl-ADP-D-ribose + nicotinamide + L-lysyl-[protein]. NAD-dependent protein deacetylase which modulates the activities of several enzymes which are inactive in their acetylated form. The sequence is that of NAD-dependent protein deacetylase from Bordetella bronchiseptica (strain ATCC BAA-588 / NCTC 13252 / RB50) (Alcaligenes bronchisepticus).